A 580-amino-acid polypeptide reads, in one-letter code: uncharacterized protein (580 aa).

This is an uncharacterized protein from Methanocaldococcus jannaschii (strain ATCC 43067 / DSM 2661 / JAL-1 / JCM 10045 / NBRC 100440) (Methanococcus jannaschii).